A 385-amino-acid polypeptide reads, in one-letter code: S-adenosylmethionine synthase (385 aa).

Residue His15 coordinates ATP. Residue Asp17 coordinates Mg(2+). Position 43 (Glu43) interacts with K(+). L-methionine contacts are provided by Glu56 and Gln99. The tract at residues 99-109 is flexible loop; it reads QSPDINQGVDR. ATP-binding positions include 164 to 166, 230 to 231, Asp239, 245 to 246, Ala262, and Lys266; these read DAK, RF, and RK. An L-methionine-binding site is contributed by Asp239. An L-methionine-binding site is contributed by Lys270.

This sequence belongs to the AdoMet synthase family. In terms of assembly, homotetramer; dimer of dimers. Mg(2+) is required as a cofactor. The cofactor is K(+).

It is found in the cytoplasm. It carries out the reaction L-methionine + ATP + H2O = S-adenosyl-L-methionine + phosphate + diphosphate. Its pathway is amino-acid biosynthesis; S-adenosyl-L-methionine biosynthesis; S-adenosyl-L-methionine from L-methionine: step 1/1. Functionally, catalyzes the formation of S-adenosylmethionine (AdoMet) from methionine and ATP. The overall synthetic reaction is composed of two sequential steps, AdoMet formation and the subsequent tripolyphosphate hydrolysis which occurs prior to release of AdoMet from the enzyme. In Hamiltonella defensa subsp. Acyrthosiphon pisum (strain 5AT), this protein is S-adenosylmethionine synthase.